The following is a 334-amino-acid chain: MAIKMDKNFTLEILNLLKNNVLKNRLKIGKELTEMLIDEIDKLIETANEISEEISKNSPNNSSLYDLRLIYNKLSTLYEDIDKLLGEIECILSLSNKDIKNWKLWKNLGDKAYLWKAYYEALFCYNKALELNQNTELLCKKGYALLKLYKRDLAIKYFEKASEKDRNNYKALFGLGKSYYLMSDNKNSIKYFEKVLELNPNDVEALEYLGELYYEEDCEKAINYFKKALELKPDDIDLILKVAFTYFKLKKYKHALKYFEKALKLNPNVFELEQIYESMGRIYIYLGEDEKAIECFEKLKEINLYHYEIYEIIALTYEEVGNIEKAKEFYKKLV.

7 TPR repeats span residues 102-135, 137-168, 169-202, 204-235, 236-269, 273-306, and 308-333; these read WKLWKNLGDKAYLWKAYYEALFCYNKALELNQNT, LLCKKGYALLKLYKRDLAIKYFEKASEKDRNN, YKALFGLGKSYYLMSDNKNSIKYFEKVLELNPND, EALEYLGELYYEEDCEKAINYFKKALELKPDD, IDLILKVAFTYFKLKKYKHALKYFEKALKLNPNV, EQIYESMGRIYIYLGEDEKAIECFEKLKEINLYH, and EIYEIIALTYEEVGNIEKAKEFYKKL.

The chain is TPR repeat-containing protein MJ0798 from Methanocaldococcus jannaschii (strain ATCC 43067 / DSM 2661 / JAL-1 / JCM 10045 / NBRC 100440) (Methanococcus jannaschii).